The chain runs to 242 residues: uncharacterized protein (242 aa).

The signal sequence occupies residues 1–17; the sequence is MKFSPAYLLAFAPIVAA. Asn-47, Asn-86, Asn-122, Asn-159, and Asn-178 each carry an N-linked (GlcNAc...) asparagine glycan. Positions 176–214 are disordered; it reads NANESTADGQAQSGSSGSSSDSGSHSGHSSATQTSSTTA. Low complexity predominate over residues 180-214; that stretch reads STADGQAQSGSSGSSSDSGSHSGHSSATQTSSTTA. Ala-218 is lipidated: GPI-like-anchor amidated alanine. Residues 219–242 constitute a propeptide, removed in mature form; sequence GAVALETAAWGILGAAVVGGLAVL.

The GPI-like anchor contains a phosphoceramide lipid group. The anchor position has not been determined.

The protein resides in the cell membrane. This is an uncharacterized protein from Aspergillus fumigatus (strain ATCC MYA-4609 / CBS 101355 / FGSC A1100 / Af293) (Neosartorya fumigata).